The chain runs to 300 residues: Ribonuclease HIII (300 aa).

Residues 83–300 (IPIIGSDEVG…THKAQALLTK (218 aa)) enclose the RNase H type-2 domain. Positions 89, 90, and 194 each coordinate a divalent metal cation.

This sequence belongs to the RNase HII family. RnhC subfamily. The cofactor is Mn(2+). It depends on Mg(2+) as a cofactor.

The protein resides in the cytoplasm. It carries out the reaction Endonucleolytic cleavage to 5'-phosphomonoester.. Its function is as follows. Endonuclease that specifically degrades the RNA of RNA-DNA hybrids. The polypeptide is Ribonuclease HIII (Streptococcus pyogenes serotype M3 (strain ATCC BAA-595 / MGAS315)).